The following is a 555-amino-acid chain: Synaptotagmin-14 (555 aa).

Residues 1–24 (MAIEGGERTCGVHELICIRKVSPE) are Extracellular-facing. The chain crosses the membrane as a helical; Signal-anchor for type III membrane protein span at residues 25–47 (AVGFLSAVGVFIILMLLLFLYIN). Over 48 to 555 (KKFCFENVGG…VCRWHALLES (508 aa)) the chain is Cytoplasmic. Disordered stretches follow at residues 157-179 (TPPLDELQPPPYQDDSGSPHLSC) and 222-257 (GYEEDVPSDSTAVLSPEDMSAQGSSSQLPKPFDPEP). C2 domains are found at residues 260-379 (KYGT…SLPV) and 415-550 (SVPE…CRWH).

The protein belongs to the synaptotagmin family. Homodimer. Can also form heterodimers. In terms of tissue distribution, highly expressed in fetal and adult brain tissue.

The protein resides in the membrane. Functionally, may be involved in the trafficking and exocytosis of secretory vesicles in non-neuronal tissues. Is Ca(2+)-independent. In Homo sapiens (Human), this protein is Synaptotagmin-14 (SYT14).